The chain runs to 136 residues: Putative nickel-responsive regulator (136 aa).

Ni(2+) contacts are provided by histidine 76, histidine 87, histidine 89, and cysteine 95.

Belongs to the transcriptional regulatory CopG/NikR family. It depends on Ni(2+) as a cofactor.

Transcriptional regulator. The protein is Putative nickel-responsive regulator of Desulfotalea psychrophila (strain LSv54 / DSM 12343).